Consider the following 84-residue polypeptide: MANHKSSIKRIRQTNARRLRNRYYAKTARNAMKVLRATEDKNEAQALFPKVCSMLDKLAKKNVIHKNKAGNLKSKLAKHVNALA.

It belongs to the bacterial ribosomal protein bS20 family.

Binds directly to 16S ribosomal RNA. The polypeptide is Small ribosomal subunit protein bS20 (Parabacteroides distasonis (strain ATCC 8503 / DSM 20701 / CIP 104284 / JCM 5825 / NCTC 11152)).